Reading from the N-terminus, the 309-residue chain is Putative rhizopine-binding protein (309 aa).

An N-terminal signal peptide occupies residues 1–20; that stretch reads MKKFIIGIAAAVLVSTAAHA.

It belongs to the bacterial solute-binding protein 2 family.

Its subcellular location is the periplasm. Functionally, involved in rhizopine (L-3-O-methyl-scyllo-inosamine) catabolism. Could be involved in its high affinity transport. This is Putative rhizopine-binding protein (mocB) from Rhizobium meliloti (Ensifer meliloti).